Consider the following 376-residue polypeptide: Na(+)/H(+) antiporter NhaA (376 aa).

A run of 11 helical transmembrane segments spans residues 8-28, 49-69, 87-107, 117-137, 140-160, 162-182, 209-229, 248-268, 270-290, 321-341, and 349-369; these read FLAT…AAML, LSLL…LVGL, ILPC…YLAF, GWAI…ALLG, APAS…MGAV, IIAL…AIVI, LAVL…ALAI, PWVA…VSFA, IGAE…LFLG, GVAL…GLAF, and EVKI…YALL.

This sequence belongs to the NhaA Na(+)/H(+) (TC 2.A.33) antiporter family.

The protein localises to the cell inner membrane. The enzyme catalyses Na(+)(in) + 2 H(+)(out) = Na(+)(out) + 2 H(+)(in). Functionally, na(+)/H(+) antiporter that extrudes sodium in exchange for external protons. This Rhizorhabdus wittichii (strain DSM 6014 / CCUG 31198 / JCM 15750 / NBRC 105917 / EY 4224 / RW1) (Sphingomonas wittichii) protein is Na(+)/H(+) antiporter NhaA.